Here is a 368-residue protein sequence, read N- to C-terminus: Glutamate 5-kinase (368 aa).

ATP is bound at residue K13. S54, D141, and N153 together coordinate substrate. 173–174 (SD) provides a ligand contact to ATP. In terms of domain architecture, PUA spans 278–355 (KGSLRLDAGA…DEIPEILGYP (78 aa)).

This sequence belongs to the glutamate 5-kinase family.

It is found in the cytoplasm. The enzyme catalyses L-glutamate + ATP = L-glutamyl 5-phosphate + ADP. The protein operates within amino-acid biosynthesis; L-proline biosynthesis; L-glutamate 5-semialdehyde from L-glutamate: step 1/2. In terms of biological role, catalyzes the transfer of a phosphate group to glutamate to form L-glutamate 5-phosphate. The sequence is that of Glutamate 5-kinase from Jannaschia sp. (strain CCS1).